A 130-amino-acid polypeptide reads, in one-letter code: Flagellar assembly factor FliW (130 aa).

Belongs to the FliW family. As to quaternary structure, interacts with translational regulator CsrA and flagellin(s).

It is found in the cytoplasm. Acts as an anti-CsrA protein, binds CsrA and prevents it from repressing translation of its target genes, one of which is flagellin. Binds to flagellin and participates in the assembly of the flagellum. The polypeptide is Flagellar assembly factor FliW (Borrelia duttonii (strain Ly)).